The chain runs to 521 residues: uncharacterized protein (521 aa).

A disordered region spans residues 1–25; sequence MLQRSLGVNGRKLAMSARSAKRERK. 6 helical membrane passes run 68–88, 114–134, 160–180, 192–212, 290–310, and 399–419; these read GAVWVLPTFGVAIGLGSGAVL, VLIVVSATMITTIGIVFSLTV, VVLAIFACTFAYSTGGLHTVG, VAVTGSLALAFVSIAALIYFL, ALLVTFVGDYVTAGGLLGWCW, and LLFWLPYPSFATYLHVGCAQI.

It is found in the cell membrane. This is an uncharacterized protein from Mycobacterium bovis (strain ATCC BAA-935 / AF2122/97).